The sequence spans 440 residues: Thymidine phosphorylase (440 aa).

Belongs to the thymidine/pyrimidine-nucleoside phosphorylase family. Homodimer.

The enzyme catalyses thymidine + phosphate = 2-deoxy-alpha-D-ribose 1-phosphate + thymine. Its pathway is pyrimidine metabolism; dTMP biosynthesis via salvage pathway; dTMP from thymine: step 1/2. Functionally, the enzymes which catalyze the reversible phosphorolysis of pyrimidine nucleosides are involved in the degradation of these compounds and in their utilization as carbon and energy sources, or in the rescue of pyrimidine bases for nucleotide synthesis. This chain is Thymidine phosphorylase, found in Yersinia pseudotuberculosis serotype O:1b (strain IP 31758).